The primary structure comprises 53 residues: Photoreceptor disk component PRCD (53 aa).

Cysteine 2 is lipidated: S-palmitoyl cysteine. Positions proline 24–lysine 53 are disordered. Residues glycine 35–threonine 45 show a composition bias toward polar residues.

Belongs to the PRCD family. As to quaternary structure, interacts with RHO/rhodopsin; the interaction promotes PRCD stability. Post-translationally, palmitoylated at Cys-2. Palmitoylation is essential for protein stability and trafficking to the photoreceptor outer segment, but does not appear to be essential for membrane localization. Probably palmitoylated by ZDHHC3. In terms of processing, phosphorylated. Expressed in retina, where it localizes to both rod and cone photoreceptors (at protein level).

Its subcellular location is the cell projection. It localises to the cilium. The protein resides in the photoreceptor outer segment. It is found in the membrane. The protein localises to the endoplasmic reticulum. Its subcellular location is the golgi apparatus. Functionally, involved in vision. The protein is Photoreceptor disk component PRCD of Mus musculus (Mouse).